The primary structure comprises 96 residues: Small ribosomal subunit protein bS6 (96 aa).

The protein belongs to the bacterial ribosomal protein bS6 family.

In terms of biological role, binds together with bS18 to 16S ribosomal RNA. In Corynebacterium aurimucosum (strain ATCC 700975 / DSM 44827 / CIP 107346 / CN-1) (Corynebacterium nigricans), this protein is Small ribosomal subunit protein bS6.